The following is a 151-amino-acid chain: MKKAVFPGSFDPLTLGHTDIIDRALPLFDEIILAIGTNSSKKYMFSLEDRLHFLKETYKNESKVKVETYKGLTVDFCKSQNAGFILRGLRNGQDLEFEKSIGQTNYKMSGIDSIFLLSSSGKAHISSTVVRDVMHHGGNYEFMVPDVVRKK.

Substrate is bound at residue Ser9. ATP-binding positions include 9 to 10 (SF) and His17. 3 residues coordinate substrate: Lys41, Thr73, and Arg87. Residues 88 to 90 (GLR), Glu98, and 122 to 128 (KAHISST) contribute to the ATP site.

This sequence belongs to the bacterial CoaD family. Homohexamer. The cofactor is Mg(2+).

Its subcellular location is the cytoplasm. The enzyme catalyses (R)-4'-phosphopantetheine + ATP + H(+) = 3'-dephospho-CoA + diphosphate. The protein operates within cofactor biosynthesis; coenzyme A biosynthesis; CoA from (R)-pantothenate: step 4/5. In terms of biological role, reversibly transfers an adenylyl group from ATP to 4'-phosphopantetheine, yielding dephospho-CoA (dPCoA) and pyrophosphate. This Christiangramia forsetii (strain DSM 17595 / CGMCC 1.15422 / KT0803) (Gramella forsetii) protein is Phosphopantetheine adenylyltransferase.